A 410-amino-acid chain; its full sequence is Arginine deiminase (410 aa).

The active-site Amidino-cysteine intermediate is the cysteine 400.

It belongs to the arginine deiminase family.

The protein localises to the cytoplasm. It catalyses the reaction L-arginine + H2O = L-citrulline + NH4(+). Its pathway is amino-acid degradation; L-arginine degradation via ADI pathway; carbamoyl phosphate from L-arginine: step 1/2. This chain is Arginine deiminase (arcA), found in Borreliella burgdorferi (strain ATCC 35210 / DSM 4680 / CIP 102532 / B31) (Borrelia burgdorferi).